Consider the following 366-residue polypeptide: MTTKKTSPDLLLVIITLLLLTIGLIMVYSASAVWADYKFDDSFFFAKRQLLFAGIGVIAMFFIMNVDYWTWRTWSKLLMVICFFLLVLVLIPGVGMVRNGSRSWIGVGAFSIQPSEFMKLAMIAFLAKFLSEKQKNITSFRRGFVPALGIVFSAFLIIMCQPDLGTGTVMVGTCIVMIFVAGARIAHFVFLGLIGLSGFVGLVLSAPYRIKRITSYLNPWEDPLGSGFQIIQSLYAVGPGGLFGMGLGQSRQKFFYLPEPQTDFIFAILSEELGFIGGTLILLLFSVLLWRGIRIALGAPDLYGSFVAVGIISMIAIQVMINIGVVTGLIPVTGITLPFLSYGGSSLTLMLMAVGVLLNVSRYSRY.

The next 10 membrane-spanning stretches (helical) occupy residues 10 to 30 (LLLV…VYSA), 50 to 70 (LLFA…DYWT), 77 to 97 (LLMV…VGMV), 105 to 125 (IGVG…MIAF), 144 to 164 (FVPA…QPDL), 185 to 205 (IAHF…LVLS), 227 to 247 (GFQI…GMGL), 264 to 284 (FIFA…ILLL), 306 to 326 (FVAV…IGVV), and 337 to 357 (LPFL…VGVL).

Belongs to the SEDS family. SpoVE subfamily.

Its subcellular location is the cell membrane. Functionally, may play an essential role not only during sporulation, but also during vegetative growth. This Bacillus subtilis (strain 168) protein is Stage V sporulation protein E (spoVE).